The following is a 280-amino-acid chain: 2,3,4,5-tetrahydropyridine-2,6-dicarboxylate N-succinyltransferase (280 aa).

2 residues coordinate substrate: Arg107 and Asp144.

It belongs to the transferase hexapeptide repeat family. In terms of assembly, homotrimer.

The protein localises to the cytoplasm. It catalyses the reaction (S)-2,3,4,5-tetrahydrodipicolinate + succinyl-CoA + H2O = (S)-2-succinylamino-6-oxoheptanedioate + CoA. It participates in amino-acid biosynthesis; L-lysine biosynthesis via DAP pathway; LL-2,6-diaminopimelate from (S)-tetrahydrodipicolinate (succinylase route): step 1/3. The sequence is that of 2,3,4,5-tetrahydropyridine-2,6-dicarboxylate N-succinyltransferase from Granulibacter bethesdensis (strain ATCC BAA-1260 / CGDNIH1).